The primary structure comprises 434 residues: Glutamyl-tRNA reductase (434 aa).

Substrate contacts are provided by residues 57 to 60 (TCNR), Ser-116, 121 to 123 (ETQ), and Gln-127. The active-site Nucleophile is Cys-58. 196–201 (GAGEMI) serves as a coordination point for NADP(+).

This sequence belongs to the glutamyl-tRNA reductase family. Homodimer.

The enzyme catalyses (S)-4-amino-5-oxopentanoate + tRNA(Glu) + NADP(+) = L-glutamyl-tRNA(Glu) + NADPH + H(+). It participates in porphyrin-containing compound metabolism; protoporphyrin-IX biosynthesis; 5-aminolevulinate from L-glutamyl-tRNA(Glu): step 1/2. Its function is as follows. Catalyzes the NADPH-dependent reduction of glutamyl-tRNA(Glu) to glutamate 1-semialdehyde (GSA). In Burkholderia pseudomallei (strain 1106a), this protein is Glutamyl-tRNA reductase.